Consider the following 1005-residue polypeptide: Espin-like protein (1005 aa).

9 ANK repeats span residues Met1–Ile31, Leu35–Asn64, Asn69–Asp99, Ser103–Leu132, Glu136–Arg166, Ser170–Leu200, Asp204–Ala234, Glu238–Arg267, and Trp270–Leu299. 2 disordered regions span residues Leu333–Gln444 and Leu462–Ala483. The segment covering Met334 to Leu346 has biased composition (pro residues). The span at Ala468 to Thr480 shows a compositional bias: polar residues. A coiled-coil region spans residues Leu517 to Leu541. Disordered stretches follow at residues Gly616–Gln644, Arg695–Gly730, and Leu773–Gly795.

In terms of assembly, interacts with MYO3A (via C-terminus). Interacts with MYO3B (via C-terminus).

It is found in the cell projection. Its subcellular location is the stereocilium. Binds to but does not cross-link actin. Required for the formation and maintenance of inner ear hair cell stereocilia and staircase formation. Essential for normal hearing. The protein is Espin-like protein (ESPNL) of Homo sapiens (Human).